The primary structure comprises 185 residues: Neuronal vesicle trafficking-associated protein 1 (185 aa).

Topologically, residues 1–82 are cytoplasmic; that stretch reads MVKLGNNFAE…ITEGVTERFK (82 aa). Residues 83-103 form a helical; Signal-anchor for type II membrane protein membrane-spanning segment; the sequence is VSVLVLFALAFLTCVVFLVVY. Topologically, residues 104–185 are lumenal; that stretch reads KVYKYDRACP…QETEAAEKSA (82 aa). Residues 129–164 are required for GRIP1 interaction; the sequence is ESYYTEQDSSAREKFYTVINHYNVAKQSITRSVSPW.

It belongs to the NSG family. In terms of assembly, forms a complex with GRIP1, GRIA2 and STX12 through direct interaction with GRIP1; controls the intracellular fate of AMPAR and the endosomal sorting of the GRIA2 subunit toward recycling and membrane targeting. Interacts with STX12. Interacts with APP; could regulate APP processing. Interacts with FAM171A1. In terms of tissue distribution, pituitary and less in adrenal gland and testis. Expressed in the hippocampus throughout development. At P0, highly and broadly expressed throughout the cortical plate, but is down-regulated overall at P8 and P14, but remains relatively enriched in layer V. At P0 is expressed ubiquitously in the developing cerebellum namely Purkinje neurons as well as granule neurons. However, it becomes restricted to Purkinje cells by P8. This exclusive expression in Purkinje cells is maintained throughout adulthood.

It localises to the membrane. Its subcellular location is the golgi apparatus. It is found in the trans-Golgi network membrane. The protein resides in the endosome membrane. The protein localises to the cell projection. It localises to the dendrite. Its subcellular location is the early endosome membrane. It is found in the late endosome membrane. The protein resides in the lysosome lumen. The protein localises to the recycling endosome membrane. It localises to the cytoplasmic vesicle membrane. Its subcellular location is the golgi stack membrane. It is found in the endosome. The protein resides in the multivesicular body membrane. The protein localises to the endoplasmic reticulum membrane. In terms of biological role, plays a role in the recycling mechanism in neurons of multiple receptors, including AMPAR, APP and L1CAM and acts at the level of early endosomes to promote sorting of receptors toward a recycling pathway. Regulates sorting and recycling of GRIA2 through interaction with GRIP1 and then contributes to the regulation of synaptic transmission and plasticity by affecting the recycling and targeting of AMPA receptors to the synapse. Is required for faithful sorting of L1CAM to axons by facilitating trafficking from somatodendritic early endosome or the recycling endosome. In an other hand, induces apoptosis via the activation of CASP3 in response to DNA damage. This chain is Neuronal vesicle trafficking-associated protein 1, found in Mus musculus (Mouse).